The sequence spans 405 residues: Potassium channel subfamily K member 13 (405 aa).

Residues 1 to 19 (MAGRGCGCSPGHLNEDNAR) lie on the Cytoplasmic side of the membrane. A helical transmembrane segment spans residues 20-40 (FLLLAGLILLYLLGGAAVFSA). 2 N-linked (GlcNAc...) asparagine glycosylation sites follow: Asn-59 and Asn-65. The segment at residues 95–115 (WDFTGAFYFVGTVVSTIGFGM) is an intramembrane region (pore-forming). Thr-110, Ile-111, and Gly-112 together coordinate K(+). The segment at 110 to 115 (TIGFGM) is selectivity filter 1. Residues 125–145 (IFLIFYGLIGCASTILFFNLF) traverse the membrane as a helical segment. Topologically, residues 146 to 193 (LERLITVIACVMRSCHQQQLRRRGAVTQDNMKAPEKGEADSLTGWKPS) are cytoplasmic. Residues 194–214 (VYYVMLILCLASVAISCGASA) traverse the membrane as a helical segment. Positions 224 to 244 (YFDSVYFCFVAFSTIGFGDLV) form an intramembrane region, pore-forming. K(+) contacts are provided by Thr-237, Ile-238, Gly-239, and Phe-240. Residues 237 to 242 (TIGFGD) are selectivity filter 2. Residues 263 to 283 (FLILMGVCCIYSLFNVISILI) traverse the membrane as a helical segment. The Cytoplasmic segment spans residues 284-405 (KQTVNWILRK…NRLAETSGDR (122 aa)).

This sequence belongs to the two pore domain potassium channel (TC 1.A.1.8) family. In terms of assembly, homodimer. Heterodimer with KCNK12.

Its subcellular location is the cell membrane. It carries out the reaction K(+)(in) = K(+)(out). Functionally, k(+) channel that conducts outward rectifying tonic currents potentiated by purinergic signals. Homo- and heterodimerizes to form functional channels with distinct regulatory and gating properties. Contributes most of K(+) currents at the plasma membrane of resting microglia. Maintains a depolarized membrane potential required for proper ramified microglia morphology and phagocytosis, selectively mediating microglial pruning of presynaptic compartments at hippocampal excitatory synapses. Upon local release of ATP caused by neuronal injury or infection, it is potentiated by P2RY12 and P2RX7 receptor signaling and contributes to ATP-triggered K(+) efflux underlying microglial NLRP3 inflammasome assembly and IL1B release. This is Potassium channel subfamily K member 13 from Mus musculus (Mouse).